We begin with the raw amino-acid sequence, 662 residues long: Protein distal antenna (662 aa).

The 52-residue stretch at 21 to 72 folds into the HTH psq-type domain; that stretch reads TKGKRPLRHLTATDKIDAIQRIHDGESKASVARDIGVPESTLRGWCKNEEKL. Positions 48–68 form a DNA-binding region, H-T-H motif; sequence KASVARDIGVPESTLRGWCKN. Disordered stretches follow at residues 265 to 299, 348 to 407, 491 to 537, and 558 to 596; these read RNARPKGNASQSPRASLPDSSGSGGGTPGDKSTPS, YSQM…PEDT, PEDL…DDEV, and QSSPGPVATAPSPLSPSSSTHENGHATPTPLADDLKSTC. The span at 349–391 shows a compositional bias: low complexity; it reads SQMPRPSSPQQPQSTPPTTTTTQQQQPQSSTPPTATPPIVSTP. The span at 511-520 shows a compositional bias: polar residues; the sequence is FNPSPSTSIK. Positions 527–536 are enriched in acidic residues; that stretch reads VDEDEDEDDE.

Homomers. Interacts with itself, danr, ey and dac to form a complex (or complexes) containing the RD factors.

Its subcellular location is the nucleus. Functionally, probable transcription factor with a role in the retinal determination (RD) network. Contributes to differentiation of antenna-specific characteristics. This is Protein distal antenna from Culex quinquefasciatus (Southern house mosquito).